Here is a 444-residue protein sequence, read N- to C-terminus: MSQSYINVIGAGLAGSEAAYQIAKRGIPVKLYEMRGVKATPQHKTTHFAELVCSNSFRGDSLTNAVGLLKEELRRLDSIIMRAGEAHRVPAGGAMAVDREGYAKAVTAELEAHPLVEIIREEVTDIPSDAITVIATGPLTSDSLAEKIHALNGGAGFYFYDAAAPIVDKSTINMDRVYLKSRYDKGEAAYLNCPMTKEEFMAFHEALTTAEEAPLNAFEKEKYFEGCMPIEVMAKRGIKTMLYGPMKPVGLEYPDDYKGPRDGDFKTPYAVVQLRQDNAAGSLYNIVGFQTHLKWGEQKRVFQMIPGLEHAEFVRYGVMHRNSYMDSPKLLTQGFQSRANHRLFFAGQMTGVEGYVESAASGLVAGINAARLFKEEEPLVFPNTTAIGSLPYYITHADSKHFQPMNVNFGIIKELDGPRIRDKKERYEAIAKRALADLAAYLTV.

10–15 (GAGLAG) contacts FAD.

This sequence belongs to the MnmG family. TrmFO subfamily. FAD serves as cofactor.

It localises to the cytoplasm. The catalysed reaction is uridine(54) in tRNA + (6R)-5,10-methylene-5,6,7,8-tetrahydrofolate + NADH + H(+) = 5-methyluridine(54) in tRNA + (6S)-5,6,7,8-tetrahydrofolate + NAD(+). The enzyme catalyses uridine(54) in tRNA + (6R)-5,10-methylene-5,6,7,8-tetrahydrofolate + NADPH + H(+) = 5-methyluridine(54) in tRNA + (6S)-5,6,7,8-tetrahydrofolate + NADP(+). In terms of biological role, catalyzes the folate-dependent formation of 5-methyl-uridine at position 54 (M-5-U54) in all tRNAs. The protein is Methylenetetrahydrofolate--tRNA-(uracil-5-)-methyltransferase TrmFO of Streptococcus equi subsp. zooepidemicus (strain H70).